A 96-amino-acid chain; its full sequence is Large ribosomal subunit protein eL21 (96 aa).

This sequence belongs to the eukaryotic ribosomal protein eL21 family.

In Methanoregula boonei (strain DSM 21154 / JCM 14090 / 6A8), this protein is Large ribosomal subunit protein eL21.